Reading from the N-terminus, the 63-residue chain is Rubredoxin-2 (63 aa).

The Rubredoxin-like domain occupies 8 to 59 (YKLFRCLQCGFEYDEAIGWPDDGIEPGTRWDEIPEDWSCPDCGAAKVDFEMV). The Fe cation site is built by Cys13, Cys16, Cys46, and Cys49.

This sequence belongs to the rubredoxin family. Requires Fe(3+) as cofactor.

Functionally, involved in the hydrocarbon hydroxylating system, which transfers electrons from NADH to rubredoxin reductase and then through rubredoxin to alkane 1 monooxygenase. The chain is Rubredoxin-2 (rubA2) from Rhodococcus erythropolis (Arthrobacter picolinophilus).